Consider the following 591-residue polypeptide: Cytidine monophosphate-N-acetylneuraminic acid hydroxylase (591 aa).

Residues Leu-16–Ser-114 form the Rieske domain. Residues Cys-56, His-58, Cys-77, and His-80 each contribute to the [2Fe-2S] cluster site.

Belongs to the CMP-Neu5Ac hydroxylase family. [2Fe-2S] cluster serves as cofactor.

It localises to the cytoplasm. The enzyme catalyses CMP-N-acetyl-beta-neuraminate + 2 Fe(II)-[cytochrome b5] + O2 + 2 H(+) = CMP-N-glycoloyl-beta-neuraminate + 2 Fe(III)-[cytochrome b5] + H2O. It participates in amino-sugar metabolism; N-acetylneuraminate metabolism. In terms of biological role, sialic acids are components of carbohydrate chains of glycoconjugates and are involved in cell-cell recognition and cell-pathogen interactions. Catalyzes the conversion of CMP-N-acetylneuraminic acid (CMP-Neu5Ac) into its hydroxylated derivative CMP-N-glycolylneuraminic acid (CMP-Neu5Gc), a sialic acid abundantly expressed at the surface of many cells. This chain is Cytidine monophosphate-N-acetylneuraminic acid hydroxylase (cmah), found in Xenopus laevis (African clawed frog).